A 1839-amino-acid chain; its full sequence is Nuclear pore complex protein DDB_G0274915 (1839 aa).

Polar residues-rich tracts occupy residues 1 to 27 (MNGR…NTIN) and 35 to 54 (NGSL…QTNK). 10 disordered regions span residues 1–54 (MNGR…QTNK), 78–150 (DESS…ISDD), 325–367 (KQFD…PNAD), 480–568 (PLNK…FSTT), 589–636 (TTIA…GGGV), 657–705 (VSTS…DVPG), 739–810 (TTTT…DSKT), 818–837 (PTTE…SSLF), 846–1106 (TTPS…FSSN), and 1129–1839 (TTAT…AKKK). Residues 80-90 (SSSSSSSSSSS) are compositionally biased toward low complexity. The segment covering 91 to 101 (YDDGNNIPQKG) has biased composition (polar residues). 2 stretches are compositionally biased toward low complexity: residues 102–148 (SSTT…INIS) and 329–343 (DNNN…SIYN). Positions 344–354 (RQSIYSPNSKI) are enriched in polar residues. Composition is skewed to low complexity over residues 495-568 (TYAT…FSTT) and 589-607 (TTIA…SSSS). Over residues 616–628 (MFTSDSNKSNLFS) the composition is skewed to polar residues. Composition is skewed to low complexity over residues 658–671 (STST…SKSS) and 739–760 (TTTT…TTDK). Over residues 761 to 773 (SSADKSSADKSST) the composition is skewed to basic and acidic residues. Low complexity-rich tracts occupy residues 774–803 (DKST…TTTT), 827–837 (PTTSLTSSSLF), and 846–871 (TTPS…NTTT). Composition is skewed to acidic residues over residues 896 to 923 (ESDE…EAEE) and 944 to 958 (LEAE…DSDE). Composition is skewed to low complexity over residues 1005 to 1021 (GSSL…SFLT) and 1046 to 1060 (SSSS…IPTT). A compositionally biased stretch (basic and acidic residues) spans 1061–1070 (SKKEKIDDKP). Over residues 1071 to 1092 (STTTTTTTTSLFGSTTTSGLFS) the composition is skewed to low complexity. Residues 1093–1106 (NPSTTSTGSLFSSN) are compositionally biased toward polar residues. Low complexity-rich tracts occupy residues 1129–1242 (TTAT…FGST) and 1250–1292 (ATTT…GLFG). Polar residues predominate over residues 1293–1310 (ASSSTTPSTGLFGSATTP). 2 stretches are compositionally biased toward low complexity: residues 1311–1384 (STGL…TTPP) and 1397–1498 (LFGT…TTAT). Positions 1507-1521 (TAPSTGLFGSTTATN) are enriched in polar residues. Low complexity predominate over residues 1522 to 1673 (PSTGLFGSTT…SSTPFGASPF (152 aa)). The segment covering 1676–1708 (PTSTSSPPFGAPTSASSTPFGAPQISTSSSTNL) has biased composition (polar residues). The span at 1712–1810 (ASSSTAAPSF…PFGSTPSTAP (99 aa)) shows a compositional bias: low complexity.

The chain is Nuclear pore complex protein DDB_G0274915 from Dictyostelium discoideum (Social amoeba).